The following is a 256-amino-acid chain: Trypsin, alkaline B (256 aa).

Positions 1 to 17 (MRLFLALLALGFAAVAA) are cleaved as a signal peptide. Residues 18–24 (VPANPQR) constitute a propeptide, activation peptide. A Peptidase S1 domain is found at 25 to 256 (IVGGSTTTIQ…RFANWIRNNS (232 aa)). Cys-55 and Cys-71 form a disulfide bridge. Active-site charge relay system residues include His-70 and Asp-115. 2 cysteine pairs are disulfide-bonded: Cys-180–Cys-197 and Cys-209–Cys-233. Catalysis depends on Ser-213, which acts as the Charge relay system.

It belongs to the peptidase S1 family. In terms of tissue distribution, midgut.

It localises to the secreted. The protein resides in the extracellular space. The enzyme catalyses Preferential cleavage: Arg-|-Xaa, Lys-|-Xaa.. This chain is Trypsin, alkaline B, found in Manduca sexta (Tobacco hawkmoth).